The following is a 400-amino-acid chain: tRNA(Met) cytidine acetate ligase (400 aa).

ATP-binding positions include 7–20 (ITEY…HIYH), glycine 102, asparagine 165, and arginine 190.

This sequence belongs to the TmcAL family.

The protein resides in the cytoplasm. It catalyses the reaction cytidine(34) in elongator tRNA(Met) + acetate + ATP = N(4)-acetylcytidine(34) in elongator tRNA(Met) + AMP + diphosphate. In terms of biological role, catalyzes the formation of N(4)-acetylcytidine (ac(4)C) at the wobble position of elongator tRNA(Met), using acetate and ATP as substrates. First activates an acetate ion to form acetyladenylate (Ac-AMP) and then transfers the acetyl group to tRNA to form ac(4)C34. In Clostridium novyi (strain NT), this protein is tRNA(Met) cytidine acetate ligase.